Consider the following 318-residue polypeptide: Mechanosensory protein 3 (318 aa).

2 consecutive LIM zinc-binding domains span residues 27-86 (NKCY…DYSA) and 87-152 (HRCA…PMDD). Residues 214–273 (RRGPRTTIRQNQLDVLNEMFSNTPKPSKHARAKLALETGLSMRVIQVWFQNRRSKERRLK) constitute a DNA-binding region (homeobox).

The protein localises to the nucleus. Functionally, specifies differentiation of the set of six touch receptor neurons. Binds cooperatively as a heterodimer with unc-86 to sites in the mec-3 gene promoter. The polypeptide is Mechanosensory protein 3 (mec-3) (Caenorhabditis briggsae).